The following is a 539-amino-acid chain: 3-hydroxy-3-methylglutaryl-coenzyme A reductase 1 (539 aa).

Residues 63 to 83 form a helical membrane-spanning segment; sequence FATVVCQLASVVYLLSLFAHP. The tract at residues 84 to 124 is linker; it reads DAPATTTGDDDDGQGGSRRARPAAAEPAPMHGHGGGMMEAD. Residues 87–116 are disordered; it reads ATTTGDDDDGQGGSRRARPAAAEPAPMHGH. The segment covering 105 to 114 has biased composition (low complexity); it reads PAAAEPAPMH. Positions 125–539 are catalytic; the sequence is DEEIVAAVAS…SSKDVAKAAS (415 aa). The active-site Charge relay system is Glu-218. N-linked (GlcNAc...) asparagine glycosylation is present at Asn-282. Residues Lys-350 and Asp-426 each act as charge relay system in the active site. Residues 496 to 516 traverse the membrane as a helical segment; the sequence is LATIVAGSVLAGELSLLAALA. His-524 serves as the catalytic Proton donor. Asn-528 is a glycosylation site (N-linked (GlcNAc...) asparagine).

It belongs to the HMG-CoA reductase family.

Its subcellular location is the endoplasmic reticulum membrane. The catalysed reaction is (R)-mevalonate + 2 NADP(+) + CoA = (3S)-3-hydroxy-3-methylglutaryl-CoA + 2 NADPH + 2 H(+). The protein operates within metabolic intermediate biosynthesis; (R)-mevalonate biosynthesis; (R)-mevalonate from acetyl-CoA: step 3/3. Its function is as follows. Catalyzes the synthesis of mevalonate. The specific precursor of all isoprenoid compounds present in plants. In Oryza sativa subsp. indica (Rice), this protein is 3-hydroxy-3-methylglutaryl-coenzyme A reductase 1 (HMG1).